Consider the following 86-residue polypeptide: MDNPFENGMKACTSLYDKYYQNCVMKLPPGACIDSENYRKCLTNHIGSCDIDTCFEDVSIACRSIYPSNYAECATTHHNICGDLQG.

This Humulus japonicus (Japanese hop) protein is Allergen Hum j 3.